A 326-amino-acid polypeptide reads, in one-letter code: Trans-L-3-hydroxyproline dehydratase (326 aa).

The active-site Proton acceptor is cysteine 80. Substrate is bound by residues 81–82, aspartate 241, and 246–247; these read GH and GS.

It belongs to the proline racemase family. Homodimer.

It catalyses the reaction trans-3-hydroxy-L-proline = 1-pyrroline-2-carboxylate + H2O. In terms of biological role, catalyzes the dehydration of trans-3-hydroxy-L-proline to delta-1-pyrroline-2-carboxylate (Pyr2C). The sequence is that of Trans-L-3-hydroxyproline dehydratase (l3hypdh) from Saccoglossus kowalevskii (Acorn worm).